The sequence spans 314 residues: Putative peptide transport system permease protein BRA1092/BS1330_II1084 (314 aa).

6 helical membrane passes run 12–32 (AIPVMLIVAILTFLLMKLLPG), 101–121 (LALLAFAITIPVGIIMGVVAA), 135–155 (LALLGVSVPSFWLAILAVILF), 177–197 (WLRSLILPASILALFQIGYLA), 237–257 (VSVLTVSGYIFSLLIGGSVVI), and 286–306 (MLFLGFLFVAINVLVDILYTI). One can recognise an ABC transmembrane type-1 domain in the interval 95–304 (LPVTISLALL…AINVLVDILY (210 aa)).

This sequence belongs to the binding-protein-dependent transport system permease family. The complex is composed of two ATP-binding proteins (BRA1094), two transmembrane proteins (BRA1092 and BRA1093) and a solute-binding protein (BRA1090).

The protein resides in the cell inner membrane. Probably part of an ABC transporter complex that could be involved in peptide import. Probably responsible for the translocation of the substrate across the membrane. The sequence is that of Putative peptide transport system permease protein BRA1092/BS1330_II1084 from Brucella suis biovar 1 (strain 1330).